The sequence spans 100 residues: MPKRILIGTVTSDKTDKTVTVLVERKVKHPLYGKIIRRSKKYHAHDEKNEYTLGDVVRIEETKPISKTKTWAVKDRVVAGGTQAIEADLDVAEATPGGAE.

This sequence belongs to the universal ribosomal protein uS17 family. Part of the 30S ribosomal subunit.

In terms of biological role, one of the primary rRNA binding proteins, it binds specifically to the 5'-end of 16S ribosomal RNA. The sequence is that of Small ribosomal subunit protein uS17 from Erythrobacter litoralis (strain HTCC2594).